The primary structure comprises 141 residues: Large ribosomal subunit protein uL16 (141 aa).

A disordered region spans residues 1–21 (MLMPKRVKYRKQQRGHNRGMA).

This sequence belongs to the universal ribosomal protein uL16 family. Part of the 50S ribosomal subunit.

Binds 23S rRNA and is also seen to make contacts with the A and possibly P site tRNAs. This chain is Large ribosomal subunit protein uL16, found in Roseiflexus castenholzii (strain DSM 13941 / HLO8).